A 107-amino-acid polypeptide reads, in one-letter code: Ribonuclease P protein component 4 (107 aa).

Cysteine 66, cysteine 69, cysteine 92, and cysteine 95 together coordinate Zn(2+).

The protein belongs to the eukaryotic/archaeal RNase P protein component 4 family. Consists of a catalytic RNA component and at least 4-5 protein subunits. It depends on Zn(2+) as a cofactor.

It is found in the cytoplasm. It carries out the reaction Endonucleolytic cleavage of RNA, removing 5'-extranucleotides from tRNA precursor.. Functionally, part of ribonuclease P, a protein complex that generates mature tRNA molecules by cleaving their 5'-ends. This Methanosarcina mazei (strain ATCC BAA-159 / DSM 3647 / Goe1 / Go1 / JCM 11833 / OCM 88) (Methanosarcina frisia) protein is Ribonuclease P protein component 4.